The sequence spans 349 residues: tRNA pseudouridine synthase D (349 aa).

Residue phenylalanine 27 participates in substrate binding. Aspartate 80 functions as the Nucleophile in the catalytic mechanism. Residue asparagine 129 coordinates substrate. The 149-residue stretch at 155–303 (GVPNYFGAQR…VEAARRAMLL (149 aa)) folds into the TRUD domain. Phenylalanine 329 serves as a coordination point for substrate.

Belongs to the pseudouridine synthase TruD family.

The catalysed reaction is uridine(13) in tRNA = pseudouridine(13) in tRNA. Its function is as follows. Responsible for synthesis of pseudouridine from uracil-13 in transfer RNAs. The protein is tRNA pseudouridine synthase D of Escherichia coli O8 (strain IAI1).